A 108-amino-acid chain; its full sequence is ATP-dependent Clp protease adapter protein ClpS (108 aa).

Basic and acidic residues predominate over residues 1 to 15 (MPHESSPDSQHEHGV). The segment at 1–22 (MPHESSPDSQHEHGVAVEAARP) is disordered.

It belongs to the ClpS family. As to quaternary structure, binds to the N-terminal domain of the chaperone ClpA.

Functionally, involved in the modulation of the specificity of the ClpAP-mediated ATP-dependent protein degradation. This is ATP-dependent Clp protease adapter protein ClpS from Stenotrophomonas maltophilia (strain K279a).